A 373-amino-acid polypeptide reads, in one-letter code: 4-hydroxy-3-methylbut-2-en-1-yl diphosphate synthase (flavodoxin) (373 aa).

Positions 270, 273, 305, and 312 each coordinate [4Fe-4S] cluster.

This sequence belongs to the IspG family. [4Fe-4S] cluster serves as cofactor.

The catalysed reaction is (2E)-4-hydroxy-3-methylbut-2-enyl diphosphate + oxidized [flavodoxin] + H2O + 2 H(+) = 2-C-methyl-D-erythritol 2,4-cyclic diphosphate + reduced [flavodoxin]. It participates in isoprenoid biosynthesis; isopentenyl diphosphate biosynthesis via DXP pathway; isopentenyl diphosphate from 1-deoxy-D-xylulose 5-phosphate: step 5/6. In terms of biological role, converts 2C-methyl-D-erythritol 2,4-cyclodiphosphate (ME-2,4cPP) into 1-hydroxy-2-methyl-2-(E)-butenyl 4-diphosphate. The sequence is that of 4-hydroxy-3-methylbut-2-en-1-yl diphosphate synthase (flavodoxin) from Sodalis glossinidius (strain morsitans).